A 699-amino-acid chain; its full sequence is Sarcoplasmic reticulum histidine-rich calcium-binding protein (699 aa).

Residues 1 to 28 (MGHHRPWLHASVLWAGVASLLLPPAMTQ) form the signal peptide. The disordered stretch occupies residues 50–95 (SEEASAELRHHLHSPRDHPDENKDVSTENGHHFWSHPDREKEDEDV). The segment covering 55–89 (AELRHHLHSPRDHPDENKDVSTENGHHFWSHPDRE) has biased composition (basic and acidic residues). At T76 the chain carries Phosphothreonine; by FAM20C. A run of 10 repeats spans residues 106–121 (HRSQ…VSGE), 134–154 (HRGH…HLPS), 155–177 (HRSH…HHHI), 180–213 (HGHR…GHQA), 214–237 (HRHR…HGPS), 238–270 (HRHQ…RHQA), 271–294 (HRHQ…RDPS), 295–318 (HRHR…GHQA), 319–342 (HRHQ…HVPD), and 343–365 (HRHQ…WHQG). A 6 X approximate tandem repeats region spans residues 106–342 (HRSQDHKVGD…SGEHHHHVPD (237 aa)). The tract at residues 106-365 (HRSQDHKVGD…DVSTERWHQG (260 aa)) is 4 X tandem repeats, acidic. Phosphoserine; by FAM20C occurs at positions 119 and 145. The disordered stretch occupies residues 127 to 617 (HGGQARGHRG…EDTGPQDAQE (491 aa)). 2 stretches are compositionally biased toward basic residues: residues 148 to 158 (HRHHLPSHRSH) and 173 to 183 (HHHHILRHGHR). Positions 187 to 206 (GEDDEGEEEEEEEEEEEEAS) are enriched in acidic residues. A compositionally biased stretch (basic residues) spans 231–241 (HHHHGPSHRHQ). Acidic residues predominate over residues 244-263 (EEDDDDDDDDDDDDDDDDVS). The span at 288 to 298 (HHHRDPSHRHR) shows a compositional bias: basic residues. Acidic residues predominate over residues 302 to 311 (EDDNDDDDVS). Over residues 324–335 (HRKEEVEAVSGE) the composition is skewed to basic and acidic residues. S333 is modified (phosphoserine). The span at 336 to 347 (HHHHVPDHRHQG) shows a compositional bias: basic residues. Residues S358 and S431 each carry the phosphoserine; by FAM20C modification. Basic and acidic residues-rich tracts occupy residues 444–463 (SHQD…EMSH) and 470–481 (VVKDRSHLRKDD). Phosphoserine; by FAM20C is present on S494. A compositionally biased stretch (basic and acidic residues) spans 504–515 (QGEKGTHHGSRD). Acidic residues-rich tracts occupy residues 532–551 (QEEE…DEER) and 567–581 (SEEE…EEDE). Position 567 is a phosphoserine; by FAM20C (S567). The metal-binding stretch occupies residues 627–673 (CGYCSFCNRCTECESCHCDEENMGEHCDQCQHCQFCYLCPLVCETVC).

It belongs to the HRC family.

It is found in the sarcoplasmic reticulum lumen. In terms of biological role, may play a role in the regulation of calcium sequestration or release in the SR of skeletal and cardiac muscle. The chain is Sarcoplasmic reticulum histidine-rich calcium-binding protein (HRC) from Homo sapiens (Human).